A 462-amino-acid polypeptide reads, in one-letter code: F-box/LRR-repeat protein At5g38396 (462 aa).

In terms of domain architecture, F-box spans 1–47; sequence MDLLRNIPDELICHILSFLTTKEAALTSVLSKRWRNLLAFVSNLHID. 5 LRR repeats span residues 118–146, 148–175, 197–222, 302–333, and 334–359; these read SIDL…KLHR, CIGQ…ELDY, VDAF…TMSS, CLDL…SIKS, and AENR…VLEG.

The sequence is that of F-box/LRR-repeat protein At5g38396 from Arabidopsis thaliana (Mouse-ear cress).